Reading from the N-terminus, the 107-residue chain is Transmembrane protein 213 (107 aa).

Positions 1 to 27 (MQRLPAATRATLILSLAFASLHSACSA) are cleaved as a signal peptide. The Extracellular portion of the chain corresponds to 28 to 70 (EASSSNSSSLTAHHPDPGTLEQCLNVDFCPQAARCCRTGVDEY). A helical transmembrane segment spans residues 71-91 (GWIAAAVGWSLWFLTLILLCV). The Cytoplasmic portion of the chain corresponds to 92 to 107 (DKLMKLTPDEPKDLQA).

It is found in the membrane. In Homo sapiens (Human), this protein is Transmembrane protein 213 (TMEM213).